Consider the following 391-residue polypeptide: Acetyl-CoA acetyltransferase (391 aa).

Cys88 functions as the Acyl-thioester intermediate in the catalytic mechanism. Catalysis depends on proton acceptor residues His347 and Cys377.

It belongs to the thiolase-like superfamily. Thiolase family. In terms of assembly, homotetramer.

The protein resides in the cytoplasm. It catalyses the reaction 2 acetyl-CoA = acetoacetyl-CoA + CoA. It participates in metabolic intermediate biosynthesis; (R)-mevalonate biosynthesis; (R)-mevalonate from acetyl-CoA: step 1/3. This chain is Acetyl-CoA acetyltransferase (phaA), found in Paracoccus denitrificans.